A 63-amino-acid polypeptide reads, in one-letter code: Large ribosomal subunit protein bL28 (63 aa).

Belongs to the bacterial ribosomal protein bL28 family.

The polypeptide is Large ribosomal subunit protein bL28 (Alkaliphilus oremlandii (strain OhILAs) (Clostridium oremlandii (strain OhILAs))).